Here is a 151-residue protein sequence, read N- to C-terminus: Protein SprT-like (151 aa).

A SprT-like domain is found at 7–147 (QKLTESISES…GKCKGKLHLH (141 aa)). Residue His-67 participates in Zn(2+) binding. Glu-68 is an active-site residue. His-71 is a binding site for Zn(2+).

It belongs to the SprT family. Zn(2+) serves as cofactor.

It is found in the cytoplasm. This Staphylococcus carnosus (strain TM300) protein is Protein SprT-like.